A 311-amino-acid polypeptide reads, in one-letter code: UDP-N-acetylenolpyruvoylglucosamine reductase (311 aa).

The region spanning lysine 28–glycine 197 is the FAD-binding PCMH-type domain. Arginine 177 is a catalytic residue. Serine 226 (proton donor) is an active-site residue. The active site involves glutamate 296.

It belongs to the MurB family. Requires FAD as cofactor.

The protein resides in the cytoplasm. It carries out the reaction UDP-N-acetyl-alpha-D-muramate + NADP(+) = UDP-N-acetyl-3-O-(1-carboxyvinyl)-alpha-D-glucosamine + NADPH + H(+). It participates in cell wall biogenesis; peptidoglycan biosynthesis. Cell wall formation. The chain is UDP-N-acetylenolpyruvoylglucosamine reductase from Magnetococcus marinus (strain ATCC BAA-1437 / JCM 17883 / MC-1).